The chain runs to 377 residues: RNA polymerase sigma factor SigA (377 aa).

Residues 72–92 (EVSNLRQGEDHDGNDNDDFNF) are disordered. Positions 144–214 (LAEANLRLVV…TRAIADQART (71 aa)) are sigma-70 factor domain-2. The Interaction with polymerase core subunit RpoC motif lies at 168–171 (DLIQ). Residues 223–299 (ETINKLIRVS…DQEALTPADA (77 aa)) form a sigma-70 factor domain-3 region. Positions 312-365 (VLDTLTEREENVLRLRFGLDDGRTRTLEEVGKVFGVTRERIRQIEAKALRKLRH) are sigma-70 factor domain-4. The H-T-H motif DNA-binding region spans 338–357 (LEEVGKVFGVTRERIRQIEA).

This sequence belongs to the sigma-70 factor family. RpoD/SigA subfamily. In terms of assembly, interacts transiently with the RNA polymerase catalytic core.

It localises to the cytoplasm. Its function is as follows. Sigma factors are initiation factors that promote the attachment of RNA polymerase to specific initiation sites and are then released. This sigma factor is the primary sigma factor during exponential growth. The chain is RNA polymerase sigma factor SigA from Bacillus sp.